The chain runs to 778 residues: uncharacterized protein (778 aa).

The 92-residue stretch at M1 to A92 folds into the PE domain. Disordered regions lie at residues A125–I163, T372–F510, and Q718–G778. 3 stretches are compositionally biased toward gly residues: residues N402–G429, D436–F510, and Q718–G763.

The protein belongs to the mycobacterial PE family. PGRS subfamily.

This is an uncharacterized protein from Mycobacterium tuberculosis (strain CDC 1551 / Oshkosh).